We begin with the raw amino-acid sequence, 318 residues long: NADH-ubiquinone oxidoreductase chain 1 (318 aa).

A run of 8 helical transmembrane segments spans residues 2 to 22 (FLTNLLMTIAPVLLAVAFLTL), 70 to 90 (MFLMAPTLALALALTMWIPLP), 102 to 122 (LLFMLAMSSLAVYAILWSGWA), 147 to 167 (AIILLSVLLLSGSYSLSTLII), 171 to 191 (YMWLILPSWPLAMMWFISTLA), 222 to 242 (LFFLAEYTNIIMMNALTTILF), 253 to 273 (ELYTINFTTKTLLLTMAFLWI), and 294 to 314 (LPLTLALCMWYTALPIITAAI).

It belongs to the complex I subunit 1 family.

The protein localises to the mitochondrion inner membrane. It catalyses the reaction a ubiquinone + NADH + 5 H(+)(in) = a ubiquinol + NAD(+) + 4 H(+)(out). Its function is as follows. Core subunit of the mitochondrial membrane respiratory chain NADH dehydrogenase (Complex I) that is believed to belong to the minimal assembly required for catalysis. Complex I functions in the transfer of electrons from NADH to the respiratory chain. The immediate electron acceptor for the enzyme is believed to be ubiquinone. The protein is NADH-ubiquinone oxidoreductase chain 1 (MT-ND1) of Diaemus youngi (White-winged vampire bat).